Reading from the N-terminus, the 240-residue chain is 1-(5-phosphoribosyl)-5-[(5-phosphoribosylamino)methylideneamino] imidazole-4-carboxamide isomerase (240 aa).

The active-site Proton acceptor is the D8. D129 serves as the catalytic Proton donor.

It belongs to the HisA/HisF family.

Its subcellular location is the cytoplasm. The enzyme catalyses 1-(5-phospho-beta-D-ribosyl)-5-[(5-phospho-beta-D-ribosylamino)methylideneamino]imidazole-4-carboxamide = 5-[(5-phospho-1-deoxy-D-ribulos-1-ylimino)methylamino]-1-(5-phospho-beta-D-ribosyl)imidazole-4-carboxamide. It participates in amino-acid biosynthesis; L-histidine biosynthesis; L-histidine from 5-phospho-alpha-D-ribose 1-diphosphate: step 4/9. The chain is 1-(5-phosphoribosyl)-5-[(5-phosphoribosylamino)methylideneamino] imidazole-4-carboxamide isomerase from Listeria monocytogenes serotype 4b (strain F2365).